The primary structure comprises 229 residues: RNA chaperone ProQ (229 aa).

Residues glutamate 105–serine 178 are disordered. The span at glutamine 117–arginine 136 shows a compositional bias: basic and acidic residues. Basic residues predominate over residues arginine 137–proline 146. Residues arginine 147–proline 176 show a composition bias toward basic and acidic residues.

Belongs to the ProQ family.

It is found in the cytoplasm. Functionally, RNA chaperone with significant RNA binding, RNA strand exchange and RNA duplexing activities. May regulate ProP activity through an RNA-based, post-transcriptional mechanism. This chain is RNA chaperone ProQ, found in Escherichia fergusonii (strain ATCC 35469 / DSM 13698 / CCUG 18766 / IAM 14443 / JCM 21226 / LMG 7866 / NBRC 102419 / NCTC 12128 / CDC 0568-73).